The sequence spans 253 residues: Ubiquinone/menaquinone biosynthesis C-methyltransferase UbiE (253 aa).

Residues Thr-76, Asp-97, and 125 to 126 (NA) contribute to the S-adenosyl-L-methionine site.

It belongs to the class I-like SAM-binding methyltransferase superfamily. MenG/UbiE family.

It catalyses the reaction a 2-demethylmenaquinol + S-adenosyl-L-methionine = a menaquinol + S-adenosyl-L-homocysteine + H(+). It carries out the reaction a 2-methoxy-6-(all-trans-polyprenyl)benzene-1,4-diol + S-adenosyl-L-methionine = a 5-methoxy-2-methyl-3-(all-trans-polyprenyl)benzene-1,4-diol + S-adenosyl-L-homocysteine + H(+). The protein operates within quinol/quinone metabolism; menaquinone biosynthesis; menaquinol from 1,4-dihydroxy-2-naphthoate: step 2/2. It participates in cofactor biosynthesis; ubiquinone biosynthesis. Methyltransferase required for the conversion of demethylmenaquinol (DMKH2) to menaquinol (MKH2) and the conversion of 2-polyprenyl-6-methoxy-1,4-benzoquinol (DDMQH2) to 2-polyprenyl-3-methyl-6-methoxy-1,4-benzoquinol (DMQH2). The protein is Ubiquinone/menaquinone biosynthesis C-methyltransferase UbiE of Rhodopseudomonas palustris (strain HaA2).